The following is a 401-amino-acid chain: Elongation factor Tu (401 aa).

Residues 10–209 (KPHINVGTIG…AVDEYIPTPQ (200 aa)) enclose the tr-type G domain. The segment at 19 to 26 (GHVDHGKT) is G1. 19 to 26 (GHVDHGKT) contributes to the GTP binding site. Thr-26 lines the Mg(2+) pocket. Positions 60-64 (GITIA) are G2. A G3 region spans residues 81-84 (DCPG). Residues 81-85 (DCPGH) and 136-139 (NKVD) contribute to the GTP site. The interval 136-139 (NKVD) is G4. Residues 174–176 (SAR) form a G5 region.

Belongs to the TRAFAC class translation factor GTPase superfamily. Classic translation factor GTPase family. EF-Tu/EF-1A subfamily. As to quaternary structure, monomer.

Its subcellular location is the cytoplasm. The catalysed reaction is GTP + H2O = GDP + phosphate + H(+). Functionally, GTP hydrolase that promotes the GTP-dependent binding of aminoacyl-tRNA to the A-site of ribosomes during protein biosynthesis. In Chloroflexus aurantiacus (strain ATCC 29366 / DSM 635 / J-10-fl), this protein is Elongation factor Tu.